The primary structure comprises 419 residues: Large ribosomal subunit protein uL4 (419 aa).

The residue at position 2 (alanine 2) is an N-acetylalanine. Residue lysine 14 is modified to N6-acetyllysine. The residue at position 97 (arginine 97) is an Omega-N-methylarginine. An N6-acetyllysine modification is found at lysine 106. Lysine 239 is covalently cross-linked (Glycyl lysine isopeptide (Lys-Gly) (interchain with G-Cter in SUMO2)). Lysine 259 carries the post-translational modification N6-acetyllysine. Threonine 266 is modified (phosphothreonine). Serine 290 and serine 295 each carry phosphoserine. Citrulline is present on arginine 300. A Glycyl lysine isopeptide (Lys-Gly) (interchain with G-Cter in SUMO2) cross-link involves residue lysine 327. N6-acetyllysine occurs at positions 333 and 353. Lysine 364 bears the N6-acetyllysine; alternate mark. Lysine 364 participates in a covalent cross-link: Glycyl lysine isopeptide (Lys-Gly) (interchain with G-Cter in SUMO1); alternate. Positions 364–379 (KSEKVVPEKGTADKKP) are enriched in basic and acidic residues. Residues 364 to 419 (KSEKVVPEKGTADKKPAVGKKGKKVDAKKQKPAGKKVVAKKPAEKKPTTEEKKPAA) form a disordered region. Phosphoserine is present on serine 365. The segment covering 393–402 (QKPAGKKVVA) has biased composition (basic residues). Basic and acidic residues predominate over residues 404 to 419 (KPAEKKPTTEEKKPAA).

This sequence belongs to the universal ribosomal protein uL4 family. Component of the large ribosomal subunit. May bind IPO9 with low affinity. Interacts with RBM3. In terms of processing, citrullinated by PADI4.

The protein resides in the cytoplasm. Its function is as follows. Component of the large ribosomal subunit. The ribosome is a large ribonucleoprotein complex responsible for the synthesis of proteins in the cell. This chain is Large ribosomal subunit protein uL4 (Rpl4), found in Mus musculus (Mouse).